The following is a 246-amino-acid chain: Sulfate transporter CysZ (246 aa).

The next 4 helical transmembrane spans lie at 24–44 (LFVL…IGFA), 69–89 (IVWP…FTMV), 148–168 (LLVL…WILF), and 214–234 (LLIP…ATLF).

It belongs to the CysZ family.

It is found in the cell inner membrane. Functionally, high affinity, high specificity proton-dependent sulfate transporter, which mediates sulfate uptake. Provides the sulfur source for the cysteine synthesis pathway. This is Sulfate transporter CysZ from Pseudomonas aeruginosa (strain LESB58).